A 224-amino-acid chain; its full sequence is Myogenin (224 aa).

A phosphoserine; by CaMK2G mark is found at S77 and S79. One can recognise a bHLH domain in the interval 81–132 (DRRRAATLREKRRLKKVNEAFEALKRSTLLNPNQRLPKVEILRSAIQYIERL). The residue at position 87 (T87) is a Phosphothreonine; by CaMK2G.

As to quaternary structure, homodimer and heterodimer with E12; heterodimerization enhances MYOG DNA-binding and transcriptional activities. Interacts with SMARCA4/BRG1/BAF190A. Interacts (via C-terminal region) with SSRP1 and SUPT16H; the interaction is indicative of an interaction with the FACT complex. Interacts with CSRP3. In terms of processing, phosphorylated by CAMK2G on threonine and serine amino acids in a muscle activity-dependent manner. Phosphorylation of Thr-87 impairs both DNA-binding and trans-activation functions in contracting muscles.

It localises to the nucleus. In terms of biological role, acts as a transcriptional activator that promotes transcription of muscle-specific target genes and plays a role in muscle differentiation, cell cycle exit and muscle atrophy. Essential for the development of functional embryonic skeletal fiber muscle differentiation. However is dispensable for postnatal skeletal muscle growth; phosphorylation by CAMK2G inhibits its transcriptional activity in respons to muscle activity. Required for the recruitment of the FACT complex to muscle-specific promoter regions, thus promoting gene expression initiation. During terminal myoblast differentiation, plays a role as a strong activator of transcription at loci with an open chromatin structure previously initiated by MYOD1. Together with MYF5 and MYOD1, co-occupies muscle-specific gene promoter core regions during myogenesis. Also cooperates with myocyte-specific enhancer factor MEF2D and BRG1-dependent recruitment of SWI/SNF chromatin-remodeling enzymes to alter chromatin structure at myogenic late gene promoters. Facilitates cell cycle exit during terminal muscle differentiation through the up-regulation of miR-20a expression, which in turn represses genes involved in cell cycle progression. Binds to the E-box containing (E1) promoter region of the miR-20a gene. Also plays a role in preventing reversal of muscle cell differentiation. Contributes to the atrophy-related gene expression in adult denervated muscles. Induces fibroblasts to differentiate into myoblasts. In Bos taurus (Bovine), this protein is Myogenin (MYOG).